Here is a 2812-residue protein sequence, read N- to C-terminus: Polyunsaturated fatty acid synthase subunit A (2812 aa).

Positions 12–472 constitute a Ketosynthase family 3 (KS3) domain; it reads DTRIAVIGMS…GANYHAVLEE (461 aa). Active-site for beta-ketoacyl synthase activity residues include Cys213, His348, and His390. A Malonyl-CoA:ACP transacylase (MAT) domain is found at 602 to 913; the sequence is LFSGQGAQYT…TVSVNPASGK (312 aa). Positions 1000 to 1048 form a coiled coil; sequence DEEAKREAARLQKQLEDAQRQLDEAKRAADEANQKLAAAKEEAKSAAAS. 3 Carrier domains span residues 1114-1193, 1232-1308, and 1342-1418; these read ALLA…KAEI, ERAE…KAEI, and AKAE…KAEI. Ser1152, Ser1267, and Ser1377 each carry O-(pantetheine 4'-phosphoryl)serine. The segment at 1422 to 1442 is disordered; it reads SAPAPAAAAPAPAAPAPAAAA. Over residues 1423–1442 the composition is skewed to low complexity; the sequence is APAPAAAAPAPAAPAPAAAA. The region spanning 1455–1531 is the Carrier 4 domain; sequence AKAETVVMEV…EVVDAMKAEI (77 aa). Position 1490 is an O-(pantetheine 4'-phosphoryl)serine (Ser1490). The segment at 1535–1555 is disordered; that stretch reads SAPAPAAAAPAPAAPAPAAAA. Residues 1536–1555 are compositionally biased toward low complexity; that stretch reads APAPAAAAPAPAAPAPAAAA. 4 Carrier domains span residues 1568 to 1644, 1681 to 1757, 1792 to 1868, and 1903 to 1979; these read AKAE…KAEI. An O-(pantetheine 4'-phosphoryl)serine mark is found at Ser1603, Ser1716, Ser1827, and Ser1938. In terms of domain architecture, Ketoreductase (KR) spans 2257 to 2484; the sequence is VVSGGARGIT…VKSICFGPWD (228 aa). Positions 2524-2651 are N-terminal hotdog fold; it reads EILVGNWRTP…RAVVVLSSQG (128 aa). Residues 2524 to 2812 enclose the PKS/mFAS DH domain; it reads EILVGNWRTP…SVIATDSLAF (289 aa). A dehydratase (DH) domain region spans residues 2540 to 2800; sequence ETITLHRKIS…NEQGDLFIDV (261 aa). The active-site Proton acceptor; for dehydratase activity is His2559. Positions 2666–2812 are C-terminal hotdog fold; it reads ADPAAQSAVY…SVIATDSLAF (147 aa). The active-site Proton donor; for dehydratase activity is Asp2730.

Component of the polyunsaturated fatty acid synthase complex composed of at least ORF-A, ORF-B and ORF-C. Requires pantetheine 4'-phosphate as cofactor.

The protein operates within lipid metabolism; fatty acid biosynthesis. Functionally, poliketide synthase-like protein; part of the polyunsaturated fatty acid synthase composed of the 3 PKS-like subunits A, B and C. While the saturated fatty acids (SFAs) in Thraustochytrium are produced by the conventional fatty acid synthase (FAS) pathway, polyunsaturated fatty acids (PUFAs) including docosahexeanoic acid (DHA) and docosapentaenoic acid (DPA) are synthesized via an anaerobical PKS pathway. PUFA synthase assimilates fatty acyl-CoA, the product of FAS, as the starter unit to synthesize DPA, and this starter unit may be butyryl-CoA, hexanoyl-CoA, or octanoyl-CoA. DPA and DHA biosynthesis seem to differ by the reduction at the N-3 position by PUFA synthase, not the extension of carbon chain. In DHA biosynthesis, PUFA synthase extends the fatty acyl chain from the methyl toward the carboxyl end, and the double bond is formed when the carbon chain is growing, instead of afterward. Therefore, PUFA synthase is unable to transform DPA to DHA, suggesting that DPA is not the precursor of DHA. Moreover, DPA molecule is partly extended by FAS KS domain, so DPA biosynthesis is less dependent on PUFA synthase KS domain than DHA. This chain is Polyunsaturated fatty acid synthase subunit A, found in Thraustochytrium sp. (strain ATCC 26185 / S-3).